Consider the following 452-residue polypeptide: Isocitrate dehydrogenase [NADP], mitochondrial (452 aa).

The transit peptide at 1–39 (MAGYLRVVRSLCRASGSRPAWAPAALTAPTSQEQTRRHY) directs the protein to the mitochondrion. N6-acetyllysine occurs at positions 45, 48, 67, and 69. N6-acetyllysine; alternate is present on residues lysine 80 and lysine 106. Lysine 80 and lysine 106 each carry N6-succinyllysine; alternate. NADP(+) is bound by residues 115–117 (TIT) and arginine 122. Threonine 117 lines the substrate pocket. Substrate contacts are provided by residues 134-140 (SPNGTIR) and arginine 149. At lysine 155 the chain carries N6-acetyllysine. Lysine 166 is subject to N6-acetyllysine; alternate. Lysine 166 is modified (N6-succinyllysine; alternate). Arginine 172 contacts substrate. 2 positions are modified to N6-acetyllysine; alternate: lysine 180 and lysine 193. N6-succinyllysine; alternate is present on residues lysine 180 and lysine 193. Lysine 199 is subject to N6-acetyllysine. Lysine 256 carries the post-translational modification N6-acetyllysine; alternate. Lysine 256 bears the N6-succinyllysine; alternate mark. An N6-acetyllysine mark is found at lysine 263, lysine 272, lysine 275, and lysine 280. Lysine 282 bears the N6-acetyllysine; alternate mark. Lysine 282 bears the N6-succinyllysine; alternate mark. Aspartate 291 provides a ligand contact to Mn(2+). Residue lysine 299 participates in NADP(+) binding. A Mn(2+)-binding site is contributed by aspartate 314. NADP(+) contacts are provided by residues 349-354 (GTVTRH) and asparagine 367. Residue lysine 384 is modified to N6-acetyllysine; alternate. Lysine 384 is modified (N6-succinyllysine; alternate). Lysine 400, lysine 413, and lysine 442 each carry N6-acetyllysine.

The protein belongs to the isocitrate and isopropylmalate dehydrogenases family. In terms of assembly, homodimer. Mg(2+) serves as cofactor. Requires Mn(2+) as cofactor. Acetylation at Lys-413 dramatically reduces catalytic activity. Deacetylated by SIRT3.

The protein localises to the mitochondrion. The catalysed reaction is D-threo-isocitrate + NADP(+) = 2-oxoglutarate + CO2 + NADPH. Functionally, plays a role in intermediary metabolism and energy production. It may tightly associate or interact with the pyruvate dehydrogenase complex. This Macaca fascicularis (Crab-eating macaque) protein is Isocitrate dehydrogenase [NADP], mitochondrial (IDH2).